Here is a 290-residue protein sequence, read N- to C-terminus: UPF0750 membrane protein YdeO (290 aa).

5 helical membrane passes run 18–38 (IIMV…VLIP), 56–76 (LFNL…VWLG), 83–103 (SFAL…SFFH), 112–132 (DTLL…GLAL), and 165–185 (LFVF…LSVI).

The protein belongs to the UPF0750 family.

The protein resides in the cell membrane. This is UPF0750 membrane protein YdeO (ydeO) from Bacillus subtilis (strain 168).